Here is a 400-residue protein sequence, read N- to C-terminus: Elongation factor Tu (400 aa).

The region spanning K10–Q208 is the tr-type G domain. The G1 stretch occupies residues G19–T26. G19–T26 lines the GTP pocket. T26 contacts Mg(2+). A G2 region spans residues G60–N64. A G3 region spans residues D81–G84. GTP contacts are provided by residues D81–H85 and N136–D139. The interval N136–D139 is G4. Residues S174–L176 form a G5 region.

This sequence belongs to the TRAFAC class translation factor GTPase superfamily. Classic translation factor GTPase family. EF-Tu/EF-1A subfamily. In terms of assembly, monomer.

It localises to the cytoplasm. It catalyses the reaction GTP + H2O = GDP + phosphate + H(+). In terms of biological role, GTP hydrolase that promotes the GTP-dependent binding of aminoacyl-tRNA to the A-site of ribosomes during protein biosynthesis. The sequence is that of Elongation factor Tu from Thermosipho africanus (strain TCF52B).